Here is a 348-residue protein sequence, read N- to C-terminus: Protein RecA (348 aa).

Residue 67–74 participates in ATP binding; sequence GPESSGKT.

This sequence belongs to the RecA family.

The protein localises to the cytoplasm. Its function is as follows. Can catalyze the hydrolysis of ATP in the presence of single-stranded DNA, the ATP-dependent uptake of single-stranded DNA by duplex DNA, and the ATP-dependent hybridization of homologous single-stranded DNAs. It interacts with LexA causing its activation and leading to its autocatalytic cleavage. This Cutibacterium acnes (Propionibacterium acnes) protein is Protein RecA.